The primary structure comprises 344 residues: Nicotinate-nucleotide--dimethylbenzimidazole phosphoribosyltransferase (344 aa).

E311 acts as the Proton acceptor in catalysis.

Belongs to the CobT family.

The catalysed reaction is 5,6-dimethylbenzimidazole + nicotinate beta-D-ribonucleotide = alpha-ribazole 5'-phosphate + nicotinate + H(+). The protein operates within nucleoside biosynthesis; alpha-ribazole biosynthesis; alpha-ribazole from 5,6-dimethylbenzimidazole: step 1/2. Catalyzes the synthesis of alpha-ribazole-5'-phosphate from nicotinate mononucleotide (NAMN) and 5,6-dimethylbenzimidazole (DMB). The sequence is that of Nicotinate-nucleotide--dimethylbenzimidazole phosphoribosyltransferase from Aromatoleum aromaticum (strain DSM 19018 / LMG 30748 / EbN1) (Azoarcus sp. (strain EbN1)).